Consider the following 98-residue polypeptide: Cystatin-B (98 aa).

The 80-residue stretch at 4–83 folds into the Cystatin domain; that stretch reads GGTSQPVDAD…PCNGETLELS (80 aa). Positions 46-50 match the Secondary area of contact motif; the sequence is QCVPG.

This sequence belongs to the cystatin family. As to expression, ubiquitously expressed in normal and lipopolysaccharide (LPS)-stimulated tissues including brain, eye, gullet, heart, liver, muscle, stomach, kidney, spleen, pyloric ceca, intestine and gill.

It localises to the cytoplasm. With respect to regulation, greatly decreased inhibitory activity against papain protease by metal ions including ZnSO(4), CuSO(4), HgCl(2) and CoCl(2). Decreased inhibitory activity against papain protease by detergents including Tween 20, SDS and Brij 35. In terms of biological role, thiol protease inhibitor. Has high papain, bovine cathepsin B and fish cathepsins F and X inhibitory activity and inhibits fish cathepsins L, S and K to a lesser extent in vitro. May be involved in innate immunity. The protein is Cystatin-B of Paralichthys olivaceus (Bastard halibut).